Here is a 174-residue protein sequence, read N- to C-terminus: UPF0316 protein LMHCC_0787 (174 aa).

Transmembrane regions (helical) follow at residues 4–24, 36–56, and 62–82; these read GIFIVATIFVVNILYVTIYTV, LAALSSVFEMIIYVVALSLVL, and IANVLAYAIGFGVGIIVGMKI.

The protein belongs to the UPF0316 family.

The protein localises to the cell membrane. This Listeria monocytogenes serotype 4a (strain HCC23) protein is UPF0316 protein LMHCC_0787.